Here is a 227-residue protein sequence, read N- to C-terminus: Fibrillarin-like rRNA/tRNA 2'-O-methyltransferase (227 aa).

Residues 82 to 83 (TT), 100 to 101 (EF), 125 to 126 (DA), and 145 to 148 (DVAQ) contribute to the S-adenosyl-L-methionine site.

This sequence belongs to the methyltransferase superfamily. Fibrillarin family. Interacts with nop5. Component of box C/D small ribonucleoprotein (sRNP) particles that contain rpl7ae, FlpA and nop5, plus a guide RNA.

Involved in pre-rRNA and tRNA processing. Utilizes the methyl donor S-adenosyl-L-methionine to catalyze the site-specific 2'-hydroxyl methylation of ribose moieties in rRNA and tRNA. Site specificity is provided by a guide RNA that base pairs with the substrate. Methylation occurs at a characteristic distance from the sequence involved in base pairing with the guide RNA. The chain is Fibrillarin-like rRNA/tRNA 2'-O-methyltransferase from Methanosarcina mazei (strain ATCC BAA-159 / DSM 3647 / Goe1 / Go1 / JCM 11833 / OCM 88) (Methanosarcina frisia).